The primary structure comprises 581 residues: Arginine--tRNA ligase (581 aa).

Positions 126–136 match the 'HIGH' region motif; it reads PNLAKEMHVGH.

This sequence belongs to the class-I aminoacyl-tRNA synthetase family. Monomer.

Its subcellular location is the cytoplasm. The enzyme catalyses tRNA(Arg) + L-arginine + ATP = L-arginyl-tRNA(Arg) + AMP + diphosphate. This chain is Arginine--tRNA ligase, found in Shewanella sp. (strain MR-4).